The primary structure comprises 1829 residues: Iron-regulated protein FrpC (1829 aa).

Hemolysin-type calcium-binding repeat units follow at residues 869 to 886, 887 to 904, 1015 to 1032, 1033 to 1050, 1051 to 1068, 1069 to 1086, 1087 to 1104, 1215 to 1232, 1233 to 1250, 1251 to 1268, 1269 to 1286, 1287 to 1304, 1415 to 1432, 1433 to 1450, 1451 to 1468, 1469 to 1486, 1487 to 1504, 1615 to 1632, 1633 to 1650, 1651 to 1668, 1669 to 1686, and 1687 to 1704; these read FGHN…NDTL, IGGA…SDTY, NGGL…DDLL, NGDA…NDTL, NGGE…NDAL, NGGE…NDTL, DGGE…NDAL, and NGGE…NDVL.

It belongs to the RTX prokaryotic toxin (TC 1.C.11) family.

It is found in the cell outer membrane. The protein resides in the secreted. In terms of biological role, may participate in the pathogenesis of meningococcal disease. The chain is Iron-regulated protein FrpC (frpC) from Neisseria meningitidis serogroup C.